Reading from the N-terminus, the 89-residue chain is Phytosulfokines 1 (89 aa).

An N-terminal signal peptide occupies residues 1-22 (MVNPGRTARALCLLCLALLLLG). Positions 23–79 (QDTHSRKLLLQEKHSHGVGNGTTTTQEPSRENGGSTGSNNNGQLQFDSAKWEEFHTD) are excised as a propeptide. The tract at residues 33–68 (QEKHSHGVGNGTTTTQEPSRENGGSTGSNNNGQLQF) is disordered. Residue Asn42 is glycosylated (N-linked (GlcNAc...) asparagine). Sulfotyrosine occurs at positions 80 and 82. Residues 85 to 89 (DVKNP) constitute a propeptide that is removed on maturation.

The protein belongs to the phytosulfokine family. In terms of processing, sulfation is important for activity and for the binding to a putative membrane receptor. PSK-alpha is produced by endopeptidase digestion. PSK-beta is produced from PSK-alpha by exopeptidase digestion. In terms of tissue distribution, expressed throughout the seedling. More abundant in fragments containing shoot or root apexes where cells proliferate vigorously.

It localises to the secreted. In terms of biological role, promotes plant cell differentiation, organogenesis and somatic embryogenesis as well as cell proliferation. This is Phytosulfokines 1 (PSK1) from Oryza sativa subsp. indica (Rice).